A 460-amino-acid chain; its full sequence is 5-hydroxytryptamine receptor 2C (460 aa).

Positions 1 to 32 (MVNLGNAVRSLLMHLIGLLVWQFDISISPVAA) are cleaved as a signal peptide. The Extracellular portion of the chain corresponds to 33 to 56 (IVTDTFNSSDGGRLFQFPDGVQNW). Residues 57-81 (PALSIVVIIIMTIGGNILVIMAVSM) traverse the membrane as a helical segment. The Cytoplasmic segment spans residues 82 to 87 (EKKLHN). The chain crosses the membrane as a helical span at residues 88-112 (ATNYFLMSLAIADMLVGLLVMPLSL). The Extracellular portion of the chain corresponds to 113 to 129 (LAILYDYVWPLPRYLCP). A disulfide bond links cysteine 128 and cysteine 208. A helical transmembrane segment spans residues 130 to 152 (VWISLDVLFSTASIMHLCAISLD). Threonine 140 is an ergotamine binding site. The DRY motif; important for ligand-induced conformation changes signature appears at 152-154 (DRY). The Cytoplasmic segment spans residues 153-168 (RYVAIRNPIEHSRFNS). A helical membrane pass occupies residues 169 to 190 (RTKAIMKIAIVWAISIGVSVPI). Topologically, residues 191–214 (PVIGLRDESKVFVNNTTCVLNDPN) are extracellular. Asparagine 204 and asparagine 205 each carry an N-linked (GlcNAc...) asparagine glycan. Leucine 210 contacts ergotamine. Residues 215 to 237 (FVLIGSFVAFFIPLTIMVITYFL) form a helical membrane-spanning segment. Topologically, residues 238–313 (TIYVLRRQTL…AINNEKKASK (76 aa)) are cytoplasmic. A disordered region spans residues 276-301 (EEENAPNPNPDQKPRRKKKEKRPRGT). A compositionally biased stretch (basic residues) spans 289–299 (PRRKKKEKRPR). Residues 314–338 (VLGIVFFVFLIMWCPFFITNILSVL) traverse the membrane as a helical segment. Cysteines 339 and 343 form a disulfide. Topologically, residues 339 to 349 (CGKACNQKLME) are extracellular. The chain crosses the membrane as a helical span at residues 350–372 (KLLNVFVWIGYVCSGINPLVYTL). Residues 366-370 (NPLVY) carry the NPxxY motif; important for ligand-induced conformation changes and signaling motif. The Cytoplasmic segment spans residues 373 to 460 (FNKIYRRAFS…NVVSERISSV (88 aa)). Residues 458 to 460 (SSV) carry the PDZ-binding motif.

Belongs to the G-protein coupled receptor 1 family. As to quaternary structure, interacts with MPDZ. Interacts with ARRB2. Interacts with MPP3; this interaction stabilizes the receptor at the plasma membrane and prevents the desensitization of the HTR2C receptor-mediated calcium response.

Its subcellular location is the cell membrane. G-protein coupled receptor for 5-hydroxytryptamine (serotonin). Also functions as a receptor for various drugs and psychoactive substances, including ergot alkaloid derivatives, 1-2,5,-dimethoxy-4-iodophenyl-2-aminopropane (DOI) and lysergic acid diethylamide (LSD). Ligand binding causes a conformation change that triggers signaling via guanine nucleotide-binding proteins (G proteins) and modulates the activity of downstream effectors. HTR2C is coupled to G(q)/G(11) G alpha proteins and activates phospholipase C-beta, releasing diacylglycerol (DAG) and inositol 1,4,5-trisphosphate (IP3) second messengers that modulate the activity of phosphatidylinositol 3-kinase and promote the release of Ca(2+) ions from intracellular stores, respectively. Beta-arrestin family members inhibit signaling via G proteins and mediate activation of alternative signaling pathways. Regulates neuronal activity via the activation of short transient receptor potential calcium channels in the brain, and thereby modulates the activation of pro-opiomelanocortin neurons and the release of CRH that then regulates the release of corticosterone. Plays a role in the regulation of appetite and eating behavior, responses to anxiogenic stimuli and stress. Plays a role in insulin sensitivity and glucose homeostasis. The protein is 5-hydroxytryptamine receptor 2C of Rattus norvegicus (Rat).